We begin with the raw amino-acid sequence, 503 residues long: Maturase K (503 aa).

Belongs to the intron maturase 2 family. MatK subfamily.

Its subcellular location is the plastid. It localises to the chloroplast. In terms of biological role, usually encoded in the trnK tRNA gene intron. Probably assists in splicing its own and other chloroplast group II introns. The protein is Maturase K of Rosa carolina (Pasture rose).